A 144-amino-acid polypeptide reads, in one-letter code: Large ribosomal subunit protein uL22 (144 aa).

The span at R124–Q137 shows a compositional bias: basic residues. Positions R124–K144 are disordered.

The protein belongs to the universal ribosomal protein uL22 family. Part of the 50S ribosomal subunit.

This protein binds specifically to 23S rRNA; its binding is stimulated by other ribosomal proteins, e.g. L4, L17, and L20. It is important during the early stages of 50S assembly. It makes multiple contacts with different domains of the 23S rRNA in the assembled 50S subunit and ribosome. In terms of biological role, the globular domain of the protein is located near the polypeptide exit tunnel on the outside of the subunit, while an extended beta-hairpin is found that lines the wall of the exit tunnel in the center of the 70S ribosome. The sequence is that of Large ribosomal subunit protein uL22 from Mycoplasmoides gallisepticum (strain R(low / passage 15 / clone 2)) (Mycoplasma gallisepticum).